Consider the following 144-residue polypeptide: Glutaredoxin-C6 (144 aa).

The 105-residue stretch at 39–143 (EAKIRRLISE…PKLVQVGALW (105 aa)) folds into the Glutaredoxin domain. A disulfide bond links cysteine 59 and cysteine 62.

It belongs to the glutaredoxin family. CC-type subfamily.

The protein resides in the cytoplasm. Functionally, has a glutathione-disulfide oxidoreductase activity in the presence of NADPH and glutathione reductase. Reduces low molecular weight disulfides and proteins. The polypeptide is Glutaredoxin-C6 (GRXC6) (Arabidopsis thaliana (Mouse-ear cress)).